The chain runs to 567 residues: Lipase maturation factor 1 (567 aa).

A disordered region spans residues 1–39 (MRPDSPTMAAPAESLRRRKTGYSDPEPESPPAPGRGPAG). The Cytoplasmic segment spans residues 1–49 (MRPDSPTMAAPAESLRRRKTGYSDPEPESPPAPGRGPAGSPAHLHTGTF). Residues 50-72 (WLTRIVLLKALAFVYFVAFLVAF) traverse the membrane as a helical segment. At 73–127 (HQNKQLIGDRGLLPCRVFLKNFQQYFQDRTSWEVFSYMPTILWLMDWSDMNSNLD) the chain is on the lumenal side. The helical transmembrane segment at 128–151 (LLALLGLGISSFVLITGCANMLLM) threads the bilayer. Topologically, residues 152–207 (AALWGLYMSLVNVGHVWYSFGWESQLLETGFLGIFLCPLWTLSRLPQHTPTSRIVL) are cytoplasmic. A helical transmembrane segment spans residues 208-221 (WGFRWLIFRIMLGA). The Lumenal segment spans residues 222–292 (GLIKIRGDRC…LGRRACIIHG (71 aa)). The chain crosses the membrane as a helical span at residues 293 to 321 (VLQILFQAVLIVSGNLSFLNWLTMVPSLA). The Cytoplasmic portion of the chain corresponds to 322-367 (CFDDATLGFLFPSGPGSLKDRVLQMQRDIRGARPEPRFGSVVRRAA). Residues 368–388 (NVSLGVLLAWLSVPVVLNLLS) traverse the membrane as a helical segment. The Lumenal portion of the chain corresponds to 389–567 (SRQVMNTHFN…DRGWPLPGPL (179 aa)).

It belongs to the lipase maturation factor family. In terms of assembly, interacts with LPL and SEL1L.

It localises to the endoplasmic reticulum membrane. Its function is as follows. Involved in the maturation of specific proteins in the endoplasmic reticulum. Required for maturation and transport of active lipoprotein lipase (LPL) through the secretory pathway. Each LMF1 molecule chaperones 50 or more molecules of LPL. The chain is Lipase maturation factor 1 (LMF1) from Homo sapiens (Human).